Consider the following 94-residue polypeptide: uncharacterized protein (94 aa).

This is an uncharacterized protein from Treponema pallidum (strain Nichols).